Consider the following 227-residue polypeptide: Cytochrome c oxidase subunit 2 (227 aa).

Residues 1 to 14 are Mitochondrial intermembrane-facing; sequence MAYPFQLGFQDAAS. A helical transmembrane segment spans residues 15–45; sequence PIMEELLHFHDHTLMIVFLISSLVLYIITLM. Residues 46–59 are Mitochondrial matrix-facing; it reads LTTKLTHTSTMDAQ. A helical membrane pass occupies residues 60–87; it reads EVETVWTILPAIILILIALPSLRILYMM. The Mitochondrial intermembrane segment spans residues 88–227; that stretch reads DEVNNPSLTV…VFEKWSVSML (140 aa). His-161, Cys-196, Glu-198, Cys-200, His-204, and Met-207 together coordinate Cu cation. Glu-198 lines the Mg(2+) pocket.

The protein belongs to the cytochrome c oxidase subunit 2 family. As to quaternary structure, component of the cytochrome c oxidase (complex IV, CIV), a multisubunit enzyme composed of 14 subunits. The complex is composed of a catalytic core of 3 subunits MT-CO1, MT-CO2 and MT-CO3, encoded in the mitochondrial DNA, and 11 supernumerary subunits COX4I, COX5A, COX5B, COX6A, COX6B, COX6C, COX7A, COX7B, COX7C, COX8 and NDUFA4, which are encoded in the nuclear genome. The complex exists as a monomer or a dimer and forms supercomplexes (SCs) in the inner mitochondrial membrane with NADH-ubiquinone oxidoreductase (complex I, CI) and ubiquinol-cytochrome c oxidoreductase (cytochrome b-c1 complex, complex III, CIII), resulting in different assemblies (supercomplex SCI(1)III(2)IV(1) and megacomplex MCI(2)III(2)IV(2)). Found in a complex with TMEM177, COA6, COX18, COX20, SCO1 and SCO2. Interacts with TMEM177 in a COX20-dependent manner. Interacts with COX20. Interacts with COX16. The cofactor is Cu cation.

It is found in the mitochondrion inner membrane. The catalysed reaction is 4 Fe(II)-[cytochrome c] + O2 + 8 H(+)(in) = 4 Fe(III)-[cytochrome c] + 2 H2O + 4 H(+)(out). Its function is as follows. Component of the cytochrome c oxidase, the last enzyme in the mitochondrial electron transport chain which drives oxidative phosphorylation. The respiratory chain contains 3 multisubunit complexes succinate dehydrogenase (complex II, CII), ubiquinol-cytochrome c oxidoreductase (cytochrome b-c1 complex, complex III, CIII) and cytochrome c oxidase (complex IV, CIV), that cooperate to transfer electrons derived from NADH and succinate to molecular oxygen, creating an electrochemical gradient over the inner membrane that drives transmembrane transport and the ATP synthase. Cytochrome c oxidase is the component of the respiratory chain that catalyzes the reduction of oxygen to water. Electrons originating from reduced cytochrome c in the intermembrane space (IMS) are transferred via the dinuclear copper A center (CU(A)) of subunit 2 and heme A of subunit 1 to the active site in subunit 1, a binuclear center (BNC) formed by heme A3 and copper B (CU(B)). The BNC reduces molecular oxygen to 2 water molecules using 4 electrons from cytochrome c in the IMS and 4 protons from the mitochondrial matrix. This is Cytochrome c oxidase subunit 2 (MT-CO2) from Balaenoptera physalus (Fin whale).